We begin with the raw amino-acid sequence, 503 residues long: Mitogen-activated protein kinase kinae mkk2 (503 aa).

Residues 1–130 are disordered; sequence MSSSPVPLLR…ASGPASASSS (130 aa). Residues 53 to 66 are compositionally biased toward pro residues; that stretch reads APQPQRPSTRPAPP. A compositionally biased stretch (polar residues) spans 100–115; the sequence is TGLNESTGHSRSSSFT. Low complexity predominate over residues 121–130; sequence ASGPASASSS. The region spanning 211–481 is the Protein kinase domain; sequence IIELGSLGEG…PWRMLEHPWM (271 aa). ATP is bound by residues 217-225 and Lys240; that span reads LGEGAGGAV. Asp338 acts as the Proton acceptor in catalysis.

It belongs to the protein kinase superfamily. STE Ser/Thr protein kinase family. MAP kinase kinase subfamily.

The catalysed reaction is L-seryl-[protein] + ATP = O-phospho-L-seryl-[protein] + ADP + H(+). The enzyme catalyses L-threonyl-[protein] + ATP = O-phospho-L-threonyl-[protein] + ADP + H(+). In terms of biological role, mitogen-activated kinase kinase (MAPKK), part of the cell wall integrity (CWI) signaling pathway composed by three protein kinases bck1, mkk2 and mpkA and responsible for the maintaining of cell-wall integrity balance. The CWI pathway also regulates the oxidative stress response, as well as the production of some secondary metabolites including pyomelanin. The protein is Mitogen-activated protein kinase kinae mkk2 of Aspergillus fumigatus (strain CBS 144.89 / FGSC A1163 / CEA10) (Neosartorya fumigata).